A 1270-amino-acid chain; its full sequence is Breakpoint cluster region protein (1270 aa).

Residues 28-55 (VGDIEQELERCKASIRRLEQEVNQERFR) adopt a coiled-coil conformation. Disordered regions lie at residues 67 to 173 (KKSY…SADA), 201 to 249 (ISSL…DYED), 295 to 396 (KSPL…RHRQ), and 412 to 484 (TGQI…LEPT). Low complexity predominate over residues 126–139 (GRPATARRPAAAAP). Phosphoserine is present on residues Ser-216 and Ser-237. Tyr-247 bears the Phosphotyrosine mark. Composition is skewed to low complexity over residues 348–358 (SSGQSSRVSPS) and 371–384 (SPSQ…DSSS). A phosphoserine mark is found at Ser-358, Ser-379, and Ser-384. The residue at position 387 (Thr-387) is a Phosphothreonine. 2 positions are modified to phosphoserine: Ser-461 and Ser-465. Residue Arg-473 is modified to Omega-N-methylarginine. Residues Ser-475 and Ser-487 each carry the phosphoserine modification. The 194-residue stretch at 497–690 (MRKWVLSGIL…QNFLSSINEE (194 aa)) folds into the DH domain. Tyr-553 is modified (phosphotyrosine). Thr-640 is subject to Phosphothreonine. Tyr-643 is modified (phosphotyrosine). A Phosphothreonine modification is found at Thr-692. Positions 707–865 (QLLKDSFMVE…WRESIREQQK (159 aa)) constitute a PH domain. The region spanning 892-1019 (HHIPLTINKE…QDRDWQRTVI (128 aa)) is the C2 domain. A Rho-GAP domain is found at 1053 to 1247 (VKIAVVTKRE…VMSQVQVLLY (195 aa)). The residue at position 1263 (Ser-1263) is a Phosphoserine.

As to quaternary structure, homotetramer. Interacts with PDZK1. May interact with CCPG1. Interacts with HCK, FES/FPS, ABL1, PIK3R1 and GRB2. Interacts with SH2D5. Interacts with DLG4. Autophosphorylated. Phosphorylated by FES/FPS on tyrosine residues, leading to down-regulation of the BCR kinase activity. Phosphorylation by HCK is important for interaction with GRB2. As to expression, expressed in brain, including the cortex, hippocampus, cerebellum, and brainstem, as well as the spinal cord (at protein level).

It localises to the postsynaptic density. Its subcellular location is the cell projection. It is found in the dendritic spine. The protein localises to the axon. The protein resides in the synapse. The catalysed reaction is L-seryl-[protein] + ATP = O-phospho-L-seryl-[protein] + ADP + H(+). The enzyme catalyses L-threonyl-[protein] + ATP = O-phospho-L-threonyl-[protein] + ADP + H(+). In terms of biological role, protein with a unique structure having two opposing regulatory activities toward small GTP-binding proteins. The C-terminus is a GTPase-activating protein (GAP) domain which stimulates GTP hydrolysis by RAC1, RAC2 and CDC42. Accelerates the intrinsic rate of GTP hydrolysis of RAC1 or CDC42, leading to down-regulation of the active GTP-bound form. The central Dbl homology (DH) domain functions as guanine nucleotide exchange factor (GEF) that modulates the GTPases CDC42, RHOA and RAC1. Promotes the conversion of CDC42, RHOA and RAC1 from the GDP-bound to the GTP-bound form. The amino terminus contains an intrinsic kinase activity. Functions as an important negative regulator of neuronal RAC1 activity. Regulates macrophage functions such as CSF1-directed motility and phagocytosis through the modulation of RAC1 activity. Plays a major role as a RHOA GEF in keratinocytes being involved in focal adhesion formation and keratinocyte differentiation. The polypeptide is Breakpoint cluster region protein (Rattus norvegicus (Rat)).